The chain runs to 108 residues: Insertion element IS6110 uncharacterized 12.0 kDa protein (108 aa).

This sequence belongs to the transposase 8 family.

The protein is Insertion element IS6110 uncharacterized 12.0 kDa protein of Mycobacterium bovis (strain ATCC BAA-935 / AF2122/97).